The chain runs to 160 residues: SsrA-binding protein (160 aa).

Residues 135 to 160 (KTHDKRETIKERDWKREQSRILRDRG) form a disordered region. Basic and acidic residues predominate over residues 138-160 (DKRETIKERDWKREQSRILRDRG).

It belongs to the SmpB family.

It is found in the cytoplasm. In terms of biological role, required for rescue of stalled ribosomes mediated by trans-translation. Binds to transfer-messenger RNA (tmRNA), required for stable association of tmRNA with ribosomes. tmRNA and SmpB together mimic tRNA shape, replacing the anticodon stem-loop with SmpB. tmRNA is encoded by the ssrA gene; the 2 termini fold to resemble tRNA(Ala) and it encodes a 'tag peptide', a short internal open reading frame. During trans-translation Ala-aminoacylated tmRNA acts like a tRNA, entering the A-site of stalled ribosomes, displacing the stalled mRNA. The ribosome then switches to translate the ORF on the tmRNA; the nascent peptide is terminated with the 'tag peptide' encoded by the tmRNA and targeted for degradation. The ribosome is freed to recommence translation, which seems to be the essential function of trans-translation. The sequence is that of SsrA-binding protein from Sphingomonas elodea.